Consider the following 1265-residue polypeptide: Methionine synthase (1265 aa).

The 320-residue stretch at 19–338 folds into the Hcy-binding domain; the sequence is QDEIEAILQE…DHIREIAEAV (320 aa). The Zn(2+) site is built by cysteine 260, cysteine 323, and cysteine 324. Positions 371–632 constitute a Pterin-binding domain; the sequence is FVNIGERCNV…IHKELLQLCE (262 aa). Residues 382-384, aspartate 449, asparagine 470, aspartate 537, asparagine 579, arginine 585, and arginine 591 contribute to the (6S)-5,6,7,8-tetrahydrofolate site; that span reads GSR. One can recognise a B12-binding N-terminal domain in the interval 662 to 759; that stretch reads QTDEWRNGPL…FMEKEREETK (98 aa). Methylcob(III)alamin is bound by residues glutamate 709, 782–786, histidine 785, serine 830, threonine 834, and alanine 886; that span reads GDVHD. One can recognise a B12-binding domain in the interval 772-907; sequence QGTIVLATVK…DENLKDEYFE (136 aa). Residues 923–1265 form the AdoMet activation domain; that stretch reads SLKERRYLTL…LGPILGYDTD (343 aa). S-adenosyl-L-methionine contacts are provided by residues aspartate 974, arginine 1172, and 1227–1228; that span reads YF. Threonine 1264 carries the phosphothreonine modification.

This sequence belongs to the vitamin-B12 dependent methionine synthase family. In terms of assembly, monomer. Dimer. Forms a multiprotein complex with MMACHC, MMADHC and MTRR. Requires methylcob(III)alamin as cofactor. The cofactor is Zn(2+).

Its subcellular location is the cytoplasm. The enzyme catalyses (6S)-5-methyl-5,6,7,8-tetrahydrofolate + L-homocysteine = (6S)-5,6,7,8-tetrahydrofolate + L-methionine. Its pathway is amino-acid biosynthesis; L-methionine biosynthesis via de novo pathway; L-methionine from L-homocysteine (MetH route): step 1/1. Catalyzes the transfer of a methyl group from methylcob(III)alamin (MeCbl) to homocysteine, yielding enzyme-bound cob(I)alamin and methionine in the cytosol. MeCbl is an active form of cobalamin (vitamin B12) used as a cofactor for methionine biosynthesis. Cob(I)alamin form is regenerated to MeCbl by a transfer of a methyl group from 5-methyltetrahydrofolate. The processing of cobalamin in the cytosol occurs in a multiprotein complex composed of at least MMACHC, MMADHC, MTRR (methionine synthase reductase) and MTR which may contribute to shuttle safely and efficiently cobalamin towards MTR in order to produce methionine. This is Methionine synthase (MTR) from Bos taurus (Bovine).